Reading from the N-terminus, the 274-residue chain is Probable lipoprotein peptidase YaeF (274 aa).

Positions 1 to 20 are cleaved as a signal peptide; that stretch reads MDKPKAYCRLFLPSFLLLSA. C21 is lipidated: N-palmitoyl cysteine. A lipid anchor (S-diacylglycerol cysteine) is attached at C21. The active-site Nucleophile is the C207. Residue H257 is the Proton acceptor of the active site.

It is found in the cell inner membrane. This chain is Probable lipoprotein peptidase YaeF (yaeF), found in Escherichia coli (strain K12).